Reading from the N-terminus, the 253-residue chain is Probable transcriptional regulatory protein syc0529_d (253 aa).

The protein belongs to the TACO1 family.

Its subcellular location is the cytoplasm. The sequence is that of Probable transcriptional regulatory protein syc0529_d from Synechococcus sp. (strain ATCC 27144 / PCC 6301 / SAUG 1402/1) (Anacystis nidulans).